The sequence spans 214 residues: Cytochrome b (214 aa).

Transmembrane regions (helical) follow at residues 31–51, 75–96, 111–131, and 176–196; these read FGSMLLACLMIQIITGFFLAI, WIMQNTHAISASLFFICIYIHI, WLSGTTLLIILMATAFFGYVL, and FFALHFILPFIIISMSSIHIL. 2 residues coordinate heme b: His-81 and His-95. Heme b-binding residues include His-180 and His-194. An a ubiquinone-binding site is contributed by His-199.

This sequence belongs to the cytochrome b family. The cytochrome bc1 complex contains 3 respiratory subunits (MT-CYB, CYC1 and UQCRFS1), 2 core proteins (UQCRC1 and UQCRC2) and probably 6 low-molecular weight proteins. Requires heme b as cofactor.

It localises to the mitochondrion inner membrane. Functionally, component of the ubiquinol-cytochrome c reductase complex (complex III or cytochrome b-c1 complex) that is part of the mitochondrial respiratory chain. The b-c1 complex mediates electron transfer from ubiquinol to cytochrome c. Contributes to the generation of a proton gradient across the mitochondrial membrane that is then used for ATP synthesis. This chain is Cytochrome b (MT-CYB), found in Bothrops atrox (Barba amarilla).